Reading from the N-terminus, the 83-residue chain is Kunitz-type serine protease inhibitor scutellin-3 (83 aa).

An N-terminal signal peptide occupies residues 1 to 24 (MSSGGLLLLLGLLTLWEVLTPVSS). One can recognise a BPTI/Kunitz inhibitor domain in the interval 31–81 (CELPADIGPCEDFTGAFHYSPREHECIEFIYGGCKGNANNFNTLEECESAC). Intrachain disulfides connect C31–C81, C40–C64, and C56–C77.

It belongs to the venom Kunitz-type family. In terms of tissue distribution, expressed by the venom gland.

It localises to the secreted. In terms of biological role, serine protease inhibitor. The protein is Kunitz-type serine protease inhibitor scutellin-3 of Oxyuranus scutellatus scutellatus (Australian taipan).